The sequence spans 305 residues: UDP-3-O-acyl-N-acetylglucosamine deacetylase (305 aa).

3 residues coordinate Zn(2+): His79, His238, and Asp242. The Proton donor role is filled by His265.

It belongs to the LpxC family. It depends on Zn(2+) as a cofactor.

It carries out the reaction a UDP-3-O-[(3R)-3-hydroxyacyl]-N-acetyl-alpha-D-glucosamine + H2O = a UDP-3-O-[(3R)-3-hydroxyacyl]-alpha-D-glucosamine + acetate. The protein operates within glycolipid biosynthesis; lipid IV(A) biosynthesis; lipid IV(A) from (3R)-3-hydroxytetradecanoyl-[acyl-carrier-protein] and UDP-N-acetyl-alpha-D-glucosamine: step 2/6. Its function is as follows. Catalyzes the hydrolysis of UDP-3-O-myristoyl-N-acetylglucosamine to form UDP-3-O-myristoylglucosamine and acetate, the committed step in lipid A biosynthesis. The polypeptide is UDP-3-O-acyl-N-acetylglucosamine deacetylase (Vibrio atlanticus (strain LGP32) (Vibrio splendidus (strain Mel32))).